A 610-amino-acid chain; its full sequence is DEAD-box ATP-dependent RNA helicase 9, mitochondrial (610 aa).

The transit peptide at 1–66 directs the protein to the mitochondrion; that stretch reads MISTVLRRSI…SSPFGVKVRD (66 aa). The Q motif signature appears at 116–144; sequence LAIADLGISPEIVKALKGRGIEKLFPIQK. Residues 147–321 enclose the Helicase ATP-binding domain; it reads LEPAMEGRDM…KKYLNNPLTI (175 aa). An ATP-binding site is contributed by 160–167; that stretch reads ARTGTGKT. The short motif at 269–272 is the DEAD box element; sequence DEAD. Positions 350–494 constitute a Helicase C-terminal domain; sequence IIGPLVKEHG…ELPSIAVERG (145 aa). The span at 542–557 shows a compositional bias: gly residues; it reads SGRSGGGGGSYGGSGG. The interval 542-610 is disordered; it reads SGRSGGGGGS…FGSNDGKRSY (69 aa). The span at 558–572 shows a compositional bias: low complexity; the sequence is SSSRYSGGSDRSSGF. Residues 573–585 show a composition bias toward gly residues; it reads GSFGSGGSSGGFG. Low complexity predominate over residues 586–596; the sequence is SDRSSQSSGRS.

Belongs to the DEAD box helicase family. DDX21/DDX50 subfamily.

It localises to the mitochondrion. The catalysed reaction is ATP + H2O = ADP + phosphate + H(+). The protein is DEAD-box ATP-dependent RNA helicase 9, mitochondrial (RH9) of Arabidopsis thaliana (Mouse-ear cress).